The sequence spans 430 residues: Histidine--tRNA ligase (430 aa).

Belongs to the class-II aminoacyl-tRNA synthetase family. As to quaternary structure, homodimer.

The protein resides in the cytoplasm. The catalysed reaction is tRNA(His) + L-histidine + ATP = L-histidyl-tRNA(His) + AMP + diphosphate + H(+). This Acinetobacter baumannii (strain AB307-0294) protein is Histidine--tRNA ligase.